The following is a 565-amino-acid chain: Hemagglutinin-neuraminidase (565 aa).

Over 1–20 the chain is Intravirion; it reads MVAEDAPVRGTCRVLFRTTT. Residues 21–41 traverse the membrane as a helical segment; that stretch reads LIFLCTLLALSISILYESLII. Over 42 to 565 the chain is Virion surface; sequence RKQIMSQAGS…VPFIRQVTLS (524 aa). Residues N110 and N139 are each glycosylated (N-linked (GlcNAc...) asparagine; by host). 3 disulfides stabilise this stretch: C161–C185, C175–C236, and C227–C240. The segment at 223–228 is involved in neuraminidase activity; that stretch reads NRKSCS. N-linked (GlcNAc...) asparagine; by host glycosylation is present at N267. 3 disulfides stabilise this stretch: C333–C454, C365–C375, and C448–C458. An N-linked (GlcNAc...) asparagine; by host glycan is attached at N504. C528 and C539 are joined by a disulfide.

Belongs to the paramyxoviruses hemagglutinin-neuraminidase family. Homotetramer; composed of disulfide-linked homodimers. Interacts with F protein trimer.

The protein resides in the virion membrane. It is found in the host cell membrane. The enzyme catalyses Hydrolysis of alpha-(2-&gt;3)-, alpha-(2-&gt;6)-, alpha-(2-&gt;8)- glycosidic linkages of terminal sialic acid residues in oligosaccharides, glycoproteins, glycolipids, colominic acid and synthetic substrates.. In terms of biological role, attaches the virus to sialic acid-containing cell receptors and thereby initiating infection. Binding of HN protein to the receptor induces a conformational change that allows the F protein to trigger virion/cell membranes fusion. Functionally, neuraminidase activity ensures the efficient spread of the virus by dissociating the mature virions from the neuraminic acid containing glycoproteins. The protein is Hemagglutinin-neuraminidase (HN) of Canis lupus familiaris (Dog).